The primary structure comprises 329 residues: Vitamin B12 import system permease protein BtuC (329 aa).

9 consecutive transmembrane segments (helical) span residues 22 to 42, 64 to 84, 91 to 111, 115 to 135, 149 to 169, 187 to 207, 243 to 263, 277 to 297, and 305 to 325; these read LSVL…QWIA, LAVL…QALF, PGLL…VLLG, LPGW…TLIL, LLAG…AIYF, GGVD…SLWI, GWMV…GLVI, ALLP…DVIA, and ELPI…WLLL.

Belongs to the binding-protein-dependent transport system permease family. FecCD subfamily. As to quaternary structure, the complex is composed of two ATP-binding proteins (BtuD), two transmembrane proteins (BtuC) and a solute-binding protein (BtuF).

Its subcellular location is the cell inner membrane. Its function is as follows. Part of the ABC transporter complex BtuCDF involved in vitamin B12 import. Involved in the translocation of the substrate across the membrane. The protein is Vitamin B12 import system permease protein BtuC of Citrobacter koseri (strain ATCC BAA-895 / CDC 4225-83 / SGSC4696).